We begin with the raw amino-acid sequence, 1461 residues long: Selection and upkeep of intraepithelial T-cells protein 5 (1461 aa).

The signal sequence occupies residues Met1–Ser24. The Extracellular portion of the chain corresponds to Ser25–Lys1306. Residues Glu26 to Lys139 enclose the Ig-like V-type domain. 2 disulfides stabilise this stretch: Cys49-Cys123 and Cys163-Cys217. One can recognise an Ig-like C1-type domain in the interval Ala142 to Ser231. The N-linked (GlcNAc...) asparagine glycan is linked to Asn200. A helical transmembrane segment spans residues Tyr1307–Leu1327. Topologically, residues Lys1328–Asp1345 are cytoplasmic. The helical transmembrane segment at Thr1346 to Phe1366 threads the bilayer. Topologically, residues Arg1367–Arg1387 are extracellular. The chain crosses the membrane as a helical span at residues Phe1388–Ile1408. At Gln1409–Met1427 the chain is on the cytoplasmic side. The helical transmembrane segment at Val1428 to Phe1448 threads the bilayer. The Extracellular portion of the chain corresponds to Asp1449 to Gly1461.

This sequence belongs to the SKINT family. As to expression, expressed in skin and, to a lower extent, testis.

Its subcellular location is the membrane. Its function is as follows. May act by engaging a cell surface molecule on immature T-cells in the embryonic thymus. The polypeptide is Selection and upkeep of intraepithelial T-cells protein 5 (Skint5) (Mus musculus (Mouse)).